The primary structure comprises 162 residues: Troponin C, skeletal muscle (162 aa).

EF-hand domains lie at Glu-17–Asn-52, Pro-53–Glu-88, Lys-93–His-128, and Val-129–Gln-162. The Ca(2+) site is built by Asp-30, Asp-32, Asp-36, Glu-41, Asp-66, Asp-68, Ser-70, Thr-72, Glu-77, Asp-106, Asn-108, Asp-110, Glu-117, Asp-142, Asn-144, Asp-146, Arg-148, and Glu-153.

This sequence belongs to the troponin C family.

Functionally, troponin is the central regulatory protein of striated muscle contraction. Tn consists of three components: Tn-I which is the inhibitor of actomyosin ATPase, Tn-T which contains the binding site for tropomyosin and Tn-C. The binding of calcium to Tn-C abolishes the inhibitory action of Tn on actin filaments. The chain is Troponin C, skeletal muscle (TNNC2) from Meleagris gallopavo (Wild turkey).